A 221-amino-acid polypeptide reads, in one-letter code: Translation initiation factor 6 (221 aa).

Belongs to the eIF-6 family.

Its function is as follows. Binds to the 50S ribosomal subunit and prevents its association with the 30S ribosomal subunit to form the 70S initiation complex. The protein is Translation initiation factor 6 of Cenarchaeum symbiosum (strain A).